Consider the following 395-residue polypeptide: Subtilisin-like protease 5 (395 aa).

An N-terminal signal peptide occupies residues 1–19; it reads MGFLTVLYLSLAALSVTNA. Positions 20-115 are excised as a propeptide; the sequence is AQIMSAPNGA…VEPDAIISQH (96 aa). The region spanning 36 to 112 is the Inhibitor I9 domain; the sequence is YIVVMKDDTS…VAFVEPDAII (77 aa). One can recognise a Peptidase S8 domain in the interval 124–395; the sequence is PWGLSRLSNR…RRLLYNGSGR (272 aa). Residues Asp-155 and His-186 each act as charge relay system in the active site. 2 N-linked (GlcNAc...) asparagine glycosylation sites follow: Asn-229 and Asn-247. Catalysis depends on Ser-341, which acts as the Charge relay system. The tract at residues 374 to 395 is disordered; that stretch reads QPTIHNPGPDTTRRLLYNGSGR. Asn-391 carries an N-linked (GlcNAc...) asparagine glycan.

This sequence belongs to the peptidase S8 family.

Its subcellular location is the secreted. In terms of biological role, secreted subtilisin-like serine protease with keratinolytic activity that contributes to pathogenicity. The polypeptide is Subtilisin-like protease 5 (SUB5) (Arthroderma otae (strain ATCC MYA-4605 / CBS 113480) (Microsporum canis)).